Here is a 662-residue protein sequence, read N- to C-terminus: Acetyl-coenzyme A synthetase (662 aa).

CoA contacts are provided by residues 197-200 (RKGK) and Thr317. Residues 393–395 (GEP), 417–422 (DTWWQT), Asp510, and Arg525 contribute to the ATP site. Ser533 provides a ligand contact to CoA. Position 536 (Arg536) interacts with ATP. Mg(2+)-binding residues include His549 and Val552. Lys623 carries the N6-acetyllysine modification.

This sequence belongs to the ATP-dependent AMP-binding enzyme family. Requires Mg(2+) as cofactor. Post-translationally, acetylated. Deacetylation by the SIR2-homolog deacetylase activates the enzyme.

The enzyme catalyses acetate + ATP + CoA = acetyl-CoA + AMP + diphosphate. Catalyzes the conversion of acetate into acetyl-CoA (AcCoA), an essential intermediate at the junction of anabolic and catabolic pathways. AcsA undergoes a two-step reaction. In the first half reaction, AcsA combines acetate with ATP to form acetyl-adenylate (AcAMP) intermediate. In the second half reaction, it can then transfer the acetyl group from AcAMP to the sulfhydryl group of CoA, forming the product AcCoA. In Helicobacter acinonychis (strain Sheeba), this protein is Acetyl-coenzyme A synthetase.